The sequence spans 54 residues: Ovomucoid (54 aa).

One can recognise a Kazal-like domain in the interval V4–C54. Disulfide bonds link C6-C36, C14-C33, and C22-C54. N43 is a glycosylation site (N-linked (GlcNAc...) asparagine).

Its subcellular location is the secreted. In Geococcyx californianus (Greater roadrunner), this protein is Ovomucoid.